We begin with the raw amino-acid sequence, 78 residues long: Putative membrane protein insertion efficiency factor (78 aa).

It belongs to the UPF0161 family.

It is found in the cell inner membrane. Functionally, could be involved in insertion of integral membrane proteins into the membrane. The chain is Putative membrane protein insertion efficiency factor from Thiobacillus denitrificans (strain ATCC 25259 / T1).